A 192-amino-acid chain; its full sequence is Putative cyclic ADP-D-ribose synthase ThsB1 (192 aa).

This sequence belongs to the Thoeris B TIR-like family. Monomer; not seen to interact with ThsA.

It localises to the cytoplasm. Activated upon phage infection. Functionally, TIR-like domain-containing component of the Thoeris antiviral defense system, composed of ThsA and ThsB. Expression of ThsA and ThsB in B.subtilis (strain BEST7003) confers resistance to phages SBSphiC, SBSphiJ and SPO1. Phage infection activates this protein so that 30 to 45 minutes post-infection with phage SPO1 it generates a signal molecule that in turn activates the NAD(+) hydrolase activity of ThsA. The signal is similar to cyclic ADP-D-ribose, but how it differs is unknown. In vitro purified (but unactivated) ThsB has no NAD(+) hydrolyzing activity, no activity on AMP, CMP, GMP or UMP, does not alter the activity of ThsA, does not bind DNA. Hydrolyzes NAD(+) to make a cyclic ADP-D-ribose (cADPR) signaling molecule; might make 3'cADPR. The protein is Putative cyclic ADP-D-ribose synthase ThsB1 of Bacillus cereus (strain MSX-D12).